Here is a 125-residue protein sequence, read N- to C-terminus: Small ribosomal subunit protein eS8 (125 aa).

The disordered stretch occupies residues 1–34 (MQWQGRSVRKSTGGRYSPSRGKRRREIGSAPAET).

It belongs to the eukaryotic ribosomal protein eS8 family. As to quaternary structure, part of the 30S ribosomal subunit.

The polypeptide is Small ribosomal subunit protein eS8 (Methanospirillum hungatei JF-1 (strain ATCC 27890 / DSM 864 / NBRC 100397 / JF-1)).